We begin with the raw amino-acid sequence, 371 residues long: Cytochrome b (371 aa).

A run of 8 helical transmembrane segments spans residues 25–45 (FGSMLLACSSMQVLTGFFLAV), 69–90 (WMMQNLHAIGASMFFICIYIHI), 105–125 (WLSGTTLLIMLMVTAFFGXXX), 170–190 (XXXXXXXXXXXXXXXXXXXXX), 218–238 (YKDLLMLSLMVLMLLMTVSFL), 280–300 (LGGALALAMSIMILLTVPFTH), 312–332 (IMQLMFWTLVATFMVITWAAT), and 339–358 (FTMISQIASTIYFLFFIMNP). H75 and H89 together coordinate heme b. Heme b contacts are provided by X174 and X188.

Belongs to the cytochrome b family. The cytochrome bc1 complex contains 3 respiratory subunits (MT-CYB, CYC1 and UQCRFS1), 2 core proteins (UQCRC1 and UQCRC2) and probably 6 low-molecular weight proteins. Requires heme b as cofactor.

It localises to the mitochondrion inner membrane. In terms of biological role, component of the ubiquinol-cytochrome c reductase complex (complex III or cytochrome b-c1 complex) that is part of the mitochondrial respiratory chain. The b-c1 complex mediates electron transfer from ubiquinol to cytochrome c. Contributes to the generation of a proton gradient across the mitochondrial membrane that is then used for ATP synthesis. This Eryx tataricus (Tartar sand boa) protein is Cytochrome b (MT-CYB).